We begin with the raw amino-acid sequence, 201 residues long: UPF0301 protein Bpet0561 (201 aa).

It belongs to the UPF0301 (AlgH) family.

This chain is UPF0301 protein Bpet0561, found in Bordetella petrii (strain ATCC BAA-461 / DSM 12804 / CCUG 43448).